The primary structure comprises 247 residues: AEGLNREQYVYLANVSEQAERYEEMVEFMQKVVVGSTPASELTVEERNLLSVAYKNVIGSLRAAWRIVSSIEQKEEGRKNDDHVSLVKHYRSKVENELTQVCATILSLLDSNLVPSASASESKVFYLKMKGDYHRYLAEFKVGDERKTATEDTMLSYKAAQDIASADLPPTHPIRLGLALNFSVFYYEILNQSDKACAMAKQAFEEAIAELDTLGEESYKDSTLIMQLLRDNLTLWTSDVQDQLDEP.

This sequence belongs to the 14-3-3 family.

The protein is 14-3-3-like protein B (GF14B) of Glycine max (Soybean).